The sequence spans 202 residues: Nucleoid occlusion factor SlmA (202 aa).

In terms of domain architecture, HTH tetR-type spans 14-75 (KERQQQVLEV…ALIERIEQTL (62 aa)). A DNA-binding region (H-T-H motif) is located at residues 38-57 (TTERLAKAVGVSEGALYRYF).

Belongs to the nucleoid occlusion factor SlmA family. As to quaternary structure, homodimer. Interacts with FtsZ.

Its subcellular location is the cytoplasm. It is found in the nucleoid. In terms of biological role, required for nucleoid occlusion (NO) phenomenon, which prevents Z-ring formation and cell division over the nucleoid. Acts as a DNA-associated cell division inhibitor that binds simultaneously chromosomal DNA and FtsZ, and disrupts the assembly of FtsZ polymers. SlmA-DNA-binding sequences (SBS) are dispersed on non-Ter regions of the chromosome, preventing FtsZ polymerization at these regions. The protein is Nucleoid occlusion factor SlmA of Actinobacillus pleuropneumoniae serotype 5b (strain L20).